Here is a 251-residue protein sequence, read N- to C-terminus: Probable phosphatase Sputw3181_2734 (251 aa).

Positions 8, 10, 16, 41, 74, 102, 132, 193, and 195 each coordinate Zn(2+).

Belongs to the PHP family. It depends on Zn(2+) as a cofactor.

The chain is Probable phosphatase Sputw3181_2734 from Shewanella sp. (strain W3-18-1).